Here is a 1243-residue protein sequence, read N- to C-terminus: Serine/threonine-protein kinase WNK4 (1243 aa).

The segment covering 1 to 17 has biased composition (polar residues); that stretch reads MLASPATETTVLMSQTE. The disordered stretch occupies residues 1–142; that stretch reads MLASPATETT…GPGSREPLRV (142 aa). The span at 65 to 77 shows a compositional bias: low complexity; the sequence is VDLGLLSSWSLPA. Pro residues predominate over residues 78–103; sequence SPAPDPPDPPDSAGPGPARSPPPSSK. Position 97 is a phosphoserine (Ser97). Positions 118–127 are enriched in basic and acidic residues; that stretch reads AAEDSARPEL. Glycyl lysine isopeptide (Lys-Gly) (interchain with G-Cter in ubiquitin) cross-links involve residues Lys157 and Lys175. Residues 174–432 form the Protein kinase domain; it reads LKFDIEIGRG…IQDLLAHAFF (259 aa). Position 184 (Ser184) interacts with ATP. Glycyl lysine isopeptide (Lys-Gly) (interchain with G-Cter in ubiquitin) cross-links involve residues Lys186, Lys226, and Lys241. ATP contacts are provided by residues 254–257 and Lys304; that span reads TELM. Asp321 serves as the catalytic Proton acceptor. Lys328 participates in a covalent cross-link: Glycyl lysine isopeptide (Lys-Gly) (interchain with G-Cter in ubiquitin). Ser331 and Ser335 each carry phosphoserine; by autocatalysis. Residues Lys387, Lys393, Lys450, and Lys454 each participate in a glycyl lysine isopeptide (Lys-Gly) (interchain with G-Cter in ubiquitin) cross-link. The interval 526 to 564 is disordered; the sequence is KARELEALPPEPGPPPATVPMAPGPPSVFPPEPEEPEAD. Residues 534 to 556 show a composition bias toward pro residues; it reads PPEPGPPPATVPMAPGPPSVFPP. Positions 557 to 567 are interaction with KLHL3; sequence EPEEPEADQHQ. Ser575 is subject to Phosphoserine. The segment covering 630-641 has biased composition (low complexity); it reads SGPGSDFSPGDS. Disordered regions lie at residues 630–683, 751–871, and 943–1110; these read SGPG…SVSD, DTGP…STPE, and SPSP…SPVW. The span at 663–676 shows a compositional bias: basic residues; it reads PPGRNLRRRPRSRL. The segment covering 767 to 780 has biased composition (pro residues); sequence EPAPLPALPVPLPD. Over residues 797-812 the composition is skewed to low complexity; that stretch reads WTAFSTSSSSPGTPLS. Over residues 822–843 the composition is skewed to pro residues; the sequence is PISPGPIFPITSPPCHPSPSPF. 3 stretches are compositionally biased toward low complexity: residues 844-854, 862-871, and 943-952; these read SPISSQVSSNP, PLPFSSSTPE, and SPSPGLLSQS. The segment covering 953 to 970 has biased composition (pro residues); that stretch reads PPAPPSPLPSLPLPPPVA. Lys1010 is covalently cross-linked (Glycyl lysine isopeptide (Lys-Gly) (interchain with G-Cter in ubiquitin)). The RFXV motif motif lies at 1016 to 1019; it reads RFQV. The residue at position 1035 (Ser1035) is a Phosphoserine. Residues 1065–1077 are compositionally biased toward basic and acidic residues; it reads ETREALAESDRAA. Residues Lys1144, Lys1157, and Lys1158 each participate in a glycyl lysine isopeptide (Lys-Gly) (interchain with G-Cter in ubiquitin) cross-link. The tract at residues 1166–1243 is disordered; sequence RLGKQPPPGI…VTFAGDVGRM (78 aa). Polar residues-rich tracts occupy residues 1193–1204 and 1216–1228; these read SFPTSRRNSLQR and NSLSGSSTGSQEQ. The residue at position 1217 (Ser1217) is a Phosphoserine.

The protein belongs to the protein kinase superfamily. Ser/Thr protein kinase family. WNK subfamily. In terms of assembly, interacts with the C-terminal region of KCNJ1. Mg(2+) serves as cofactor. Post-translationally, autophosphorylated at Ser-331 and Ser-335, promoting its activation. Phosphorylated by WNK1 and WNK3. Phosphorylated at Ser-575 in a MAP3K15/ASK3-dependent process in response to osmotic stress or hypotonic low-chloride stimulation. Ubiquitinated by the BCR(KLHL3) complex, leading to its degradation. Also ubiquitinated by the BCR(KLHL2) complex. In terms of tissue distribution, expressed in kidney, colon and skin.

The protein localises to the cell junction. It localises to the tight junction. The catalysed reaction is L-seryl-[protein] + ATP = O-phospho-L-seryl-[protein] + ADP + H(+). It catalyses the reaction L-threonyl-[protein] + ATP = O-phospho-L-threonyl-[protein] + ADP + H(+). With respect to regulation, activation requires autophosphorylation of Ser-331 and Ser-335. Autophosphorylation and subsequent activation is inhibited by increases in intracellular ionic strength: Cl(-) potently inhibits WNK4 kinase activity via direct binding. Also inhibited by K(+) ions. Functionally, serine/threonine-protein kinase component of the WNK4-SPAK/OSR1 kinase cascade, which acts as a key regulator of ion transport in the distal nephron and blood pressure. The WNK4-SPAK/OSR1 kinase cascade is composed of WNK4, which mediates phosphorylation and activation of downstream kinases OXSR1/OSR1 and STK39/SPAK. Following activation, OXSR1/OSR1 and STK39/SPAK catalyze phosphorylation of ion cotransporters, such as SLC12A1/NKCC2, SLC12A2/NKCC1, SLC12A3/NCC, SLC12A5/KCC2 or SLC12A6/KCC3, regulating their activity. Acts as a molecular switch that regulates the balance between renal salt reabsorption and K(+) secretion by modulating the activities of renal transporters and channels, including the Na-Cl cotransporter SLC12A3/NCC and the K(+) channel, KCNJ1/ROMK. Regulates NaCl reabsorption in the distal nephron by activating the thiazide-sensitive Na-Cl cotransporter SLC12A3/NCC in distal convoluted tubule cells of kidney: activates SLC12A3/NCC in a OXSR1/OSR1- and STK39/SPAK-dependent process. Also acts as a scaffold protein independently of its protein kinase activity: negatively regulates cell membrane localization of various transporters and channels (CFTR, KCNJ1/ROMK, SLC4A4, SLC26A9 and TRPV4) by clathrin-dependent endocytosis. Also inhibits the activity of the epithelial Na(+) channel (ENaC) SCNN1A, SCNN1B, SCNN1D in a inase-independent mechanism. May also phosphorylate NEDD4L. The protein is Serine/threonine-protein kinase WNK4 of Homo sapiens (Human).